The following is a 274-amino-acid chain: Cytochrome b-c1 complex subunit Rieske, mitochondrial (274 aa).

The Mitochondrial matrix segment spans residues 79 to 103 (SHTDVKVPDFYDYRRLEVLDSTKSS). Residues 104–140 (RESSEARKGFSYLVTAVTTVGVAYAAKNAVTQFISSM) traverse the membrane as a helical segment. The Mitochondrial intermembrane portion of the chain corresponds to 141–274 (SASADVLAMA…FTSDDMVVVG (134 aa)). The Rieske domain occupies 187 to 272 (EAAVELSQLR…YEFTSDDMVV (86 aa)). 5 residues coordinate [2Fe-2S] cluster: Cys217, His219, Cys236, His239, and Ser241. Cys222 and Cys238 form a disulfide bridge.

It belongs to the Rieske iron-sulfur protein family. As to quaternary structure, component of the ubiquinol-cytochrome c oxidoreductase (cytochrome b-c1 complex, complex III, CIII), a multisubunit enzyme composed of 11 subunits. The complex is composed of 3 respiratory subunits cytochrome b, cytochrome c1 and Rieske protein UQCRFS1, 2 core protein subunits UQCRC1/QCR1 and UQCRC2/QCR2, and 6 low-molecular weight protein subunits UQCRH/QCR6, UQCRB/QCR7, UQCRQ/QCR8, UQCR10/QCR9, UQCR11/QCR10 and subunit 9, the cleavage product of Rieske protein UQCRFS1. The complex exists as an obligatory dimer and forms supercomplexes (SCs) in the inner mitochondrial membrane with NADH-ubiquinone oxidoreductase (complex I, CI) and cytochrome c oxidase (complex IV, CIV), resulting in different assemblies (supercomplex SCI(1)III(2)IV(1) and megacomplex MCI(2)III(2)IV(2)). Incorporation of the Rieske protein UQCRFS1 is the penultimate step in complex III assembly. Interacts with TTC19, which is involved in the clearance of UQCRFS1 fragments. In terms of assembly, component of the ubiquinol-cytochrome c oxidoreductase (cytochrome b-c1 complex, complex III, CIII). Subunit 9 corresponds to the mitochondrial targeting sequence (MTS) of Rieske protein UQCRFS1. It is retained after processing and incorporated inside complex III, where it remains bound to the complex and localizes between the 2 core subunits UQCRC1/QCR1 and UQCRC2/QCR2. The cofactor is [2Fe-2S] cluster. Proteolytic processing is necessary for the correct insertion of UQCRFS1 in the complex III dimer. Several fragments are generated during UQCRFS1 insertion, most probably due to the endogenous matrix-processing peptidase (MPP) activity of the 2 core protein subunits UQCRC1/QCR1 and UQCRC2/QCR2, which are homologous to the 2 mitochondrial-processing peptidase (MPP) subunits beta-MPP and alpha-MPP respectively. The action of the protease is also necessary for the clearance of the UQCRFS1 fragments.

Its subcellular location is the mitochondrion inner membrane. The catalysed reaction is a quinol + 2 Fe(III)-[cytochrome c](out) = a quinone + 2 Fe(II)-[cytochrome c](out) + 2 H(+)(out). Its function is as follows. Component of the ubiquinol-cytochrome c oxidoreductase, a multisubunit transmembrane complex that is part of the mitochondrial electron transport chain which drives oxidative phosphorylation. The respiratory chain contains 3 multisubunit complexes succinate dehydrogenase (complex II, CII), ubiquinol-cytochrome c oxidoreductase (cytochrome b-c1 complex, complex III, CIII) and cytochrome c oxidase (complex IV, CIV), that cooperate to transfer electrons derived from NADH and succinate to molecular oxygen, creating an electrochemical gradient over the inner membrane that drives transmembrane transport and the ATP synthase. The cytochrome b-c1 complex catalyzes electron transfer from ubiquinol to cytochrome c, linking this redox reaction to translocation of protons across the mitochondrial inner membrane, with protons being carried across the membrane as hydrogens on the quinol. In the process called Q cycle, 2 protons are consumed from the matrix, 4 protons are released into the intermembrane space and 2 electrons are passed to cytochrome c. The Rieske protein is a catalytic core subunit containing a [2Fe-2S] iron-sulfur cluster. It cycles between 2 conformational states during catalysis to transfer electrons from the quinol bound in the Q(0) site in cytochrome b to cytochrome c1. Incorporation of UQCRFS1 is the penultimate step in complex III assembly. In terms of biological role, component of the ubiquinol-cytochrome c oxidoreductase (cytochrome b-c1 complex, complex III, CIII). UQCRFS1 undergoes proteolytic processing once it is incorporated in the complex III dimer. One of the fragments, called subunit 9, corresponds to its mitochondrial targeting sequence (MTS). The proteolytic processing is necessary for the correct insertion of UQCRFS1 in the complex III dimer, but the persistence of UQCRFS1-derived fragments may prevent newly imported UQCRFS1 to be processed and assembled into complex III and is detrimental for the complex III structure and function. In Theropithecus gelada (Gelada baboon), this protein is Cytochrome b-c1 complex subunit Rieske, mitochondrial (UQCRFS1).